A 608-amino-acid polypeptide reads, in one-letter code: MTHSEYRDEYCGAVTESLIEQTISVVGWVHRRRDHGGVIFLDMRDRAGILQVVVDPDTPEAFATADAVRPEYVLKITGRVRRRYEGTENANMTSGHIELLAKEIEVLAKSETPPFPLNDEKSTVSEDLRLKYRYLDMRRPQMQDRMVFRAKATSAIRRYLDDHGFLDVETPILTRATPEGARDYLVPSRTRPGNFFALPQSPQLFKQLLMVAGFDRYYQIAKCFRDEDLRADRQPEFTQVDIETSFLNEEEIMNINEGLIKHVFKTMMDVEFEKFPRMTYAEAMRDYASDKPDLRIPLKLIDVADLMKDVDFKVFAGPANDPKGRVAALRIPGGASLSRKQIDAYTKFVGIYGARGLAYIKVNDASNINNGVDKESGLQSPIIKNMTDDVLVSLIERTGAESNDIIFFGADKASVVNDAIGALRQKIGLDLEMTTCEWAPLWVTDFPMFEETEDGRWTSMHHPFTKPKGSVEELKTNPESALSIAYDMVLNGTEVGGGSLRINTLEMQTAVFEALGIDDQEAEDKFGFLLDALKFGAPPHGGLAFGLDRLIMLMVGASSIRDVIAFPKTKTAECPLTQAPAEVNTKQLRELGIRVREKVQADTSKPAE.

L-aspartate is bound at residue glutamate 179. Residues 203 to 206 (QLFK) are aspartate. Arginine 225 serves as a coordination point for L-aspartate. ATP-binding positions include 225 to 227 (RDE) and glutamine 234. Histidine 461 contributes to the L-aspartate binding site. ATP is bound at residue glutamate 494. L-aspartate is bound at residue arginine 501. 546–549 (GLDR) serves as a coordination point for ATP.

It belongs to the class-II aminoacyl-tRNA synthetase family. Type 1 subfamily. As to quaternary structure, homodimer.

It localises to the cytoplasm. It catalyses the reaction tRNA(Asx) + L-aspartate + ATP = L-aspartyl-tRNA(Asx) + AMP + diphosphate. Functionally, aspartyl-tRNA synthetase with relaxed tRNA specificity since it is able to aspartylate not only its cognate tRNA(Asp) but also tRNA(Asn). Reaction proceeds in two steps: L-aspartate is first activated by ATP to form Asp-AMP and then transferred to the acceptor end of tRNA(Asp/Asn). The sequence is that of Aspartate--tRNA(Asp/Asn) ligase from Psychrobacter arcticus (strain DSM 17307 / VKM B-2377 / 273-4).